We begin with the raw amino-acid sequence, 155 residues long: uncharacterized protein (155 aa).

The protein belongs to the IIV-6 145L family.

This is an uncharacterized protein from Acheta domesticus (House cricket).